Here is a 310-residue protein sequence, read N- to C-terminus: Glutaminase (310 aa).

Residues Ser67, Asn118, Glu161, Asn168, Tyr192, Tyr244, and Val262 each contribute to the substrate site.

The protein belongs to the glutaminase family. As to quaternary structure, homotetramer.

It carries out the reaction L-glutamine + H2O = L-glutamate + NH4(+). In Legionella pneumophila (strain Corby), this protein is Glutaminase.